We begin with the raw amino-acid sequence, 369 residues long: Methionine aminopeptidase 1B, chloroplastic (369 aa).

Residues 1–61 (MASSVFLSSF…YSPRQFHVSA (61 aa)) constitute a chloroplast transit peptide. His199 serves as a coordination point for substrate. The a divalent metal cation site is built by Asp216, Asp227, and His290. His297 contacts substrate. Residues Glu322 and Glu353 each contribute to the a divalent metal cation site.

The protein belongs to the peptidase M24A family. Methionine aminopeptidase type 1 subfamily. The cofactor is Co(2+). Requires Zn(2+) as cofactor. Mn(2+) is required as a cofactor. Fe(2+) serves as cofactor. As to expression, ubiquitous. Preferentially expressed in green tissues.

Its subcellular location is the plastid. The protein resides in the chloroplast. It catalyses the reaction Release of N-terminal amino acids, preferentially methionine, from peptides and arylamides.. Its function is as follows. Removes the N-terminal methionine from nascent proteins. The N-terminal methionine is often cleaved when the second residue in the primary sequence is small and uncharged (Met-Ala-, Cys, Gly, Pro, Ser, Thr, or Val). This is Methionine aminopeptidase 1B, chloroplastic (MAP1B) from Arabidopsis thaliana (Mouse-ear cress).